Here is a 556-residue protein sequence, read N- to C-terminus: Energy-dependent translational throttle protein EttA (556 aa).

2 consecutive ABC transporter domains span residues 7–260 (YTMH…EQEQ) and 325–551 (IEVQ…RIKY). 40–47 (GLNGAGKS) serves as a coordination point for ATP. Residues 96 to 140 (SEVKNALTRLDEVYALYADPDADFDKLAAEQANLEAIIQAHDGHN) are arm. The ptIM stretch occupies residues 243 to 323 (GNYSSWLEQK…IPPGPRLGDK (81 aa)). 357–364 (GANGAGKS) is a binding site for ATP.

It belongs to the ABC transporter superfamily. ABCF family. Translational throttle EttA subfamily. As to quaternary structure, monomer. Probably contacts ribosomal proteins L1, L5, L33 and S7, the 16S and 23S rRNA and the P-site containing tRNA(fMet).

The protein resides in the cytoplasm. The enzyme catalyses ATP + H2O = ADP + phosphate + H(+). Functionally, a translation factor that gates the progression of the 70S ribosomal initiation complex (IC, containing tRNA(fMet) in the P-site) into the translation elongation cycle by using a mechanism sensitive to the ATP/ADP ratio. Binds to the 70S ribosome E-site where it modulates the state of the translating ribosome during subunit translocation. ATP hydrolysis probably frees it from the ribosome, which can enter the elongation phase. This is Energy-dependent translational throttle protein EttA from Haemophilus influenzae (strain ATCC 51907 / DSM 11121 / KW20 / Rd).